The following is a 146-amino-acid chain: D-aminoacyl-tRNA deacylase (146 aa).

The Gly-cisPro motif, important for rejection of L-amino acids motif lies at 137 to 138; it reads GP.

The protein belongs to the DTD family. As to quaternary structure, homodimer.

The protein localises to the cytoplasm. The enzyme catalyses glycyl-tRNA(Ala) + H2O = tRNA(Ala) + glycine + H(+). It carries out the reaction a D-aminoacyl-tRNA + H2O = a tRNA + a D-alpha-amino acid + H(+). Its function is as follows. An aminoacyl-tRNA editing enzyme that deacylates mischarged D-aminoacyl-tRNAs. Also deacylates mischarged glycyl-tRNA(Ala), protecting cells against glycine mischarging by AlaRS. Acts via tRNA-based rather than protein-based catalysis; rejects L-amino acids rather than detecting D-amino acids in the active site. By recycling D-aminoacyl-tRNA to D-amino acids and free tRNA molecules, this enzyme counteracts the toxicity associated with the formation of D-aminoacyl-tRNA entities in vivo and helps enforce protein L-homochirality. This chain is D-aminoacyl-tRNA deacylase, found in Desulfatibacillum aliphaticivorans.